We begin with the raw amino-acid sequence, 219 residues long: 23.6 kDa heat shock protein, mitochondrial (219 aa).

Residues 1 to 29 (MALARQCLSKRLAAGCALARPLHAASPVA) constitute a mitochondrion transit peptide. The 116-residue stretch at 104-219 (QVAETLTRPL…KRSVTEVKVR (116 aa)) folds into the sHSP domain.

The protein belongs to the small heat shock protein (HSP20) family. May form oligomeric structures.

The protein resides in the mitochondrion. This chain is 23.6 kDa heat shock protein, mitochondrial (HSP23.6), found in Oryza sativa subsp. japonica (Rice).